The primary structure comprises 311 residues: Ribosomal RNA small subunit methyltransferase H (311 aa).

Residues 33–35, Asp-51, Phe-78, Asp-99, and Gln-106 contribute to the S-adenosyl-L-methionine site; that span reads GGH. Positions 289–311 are disordered; that stretch reads EEIEKNRRAHSAKLRAAEKLSFA.

Belongs to the methyltransferase superfamily. RsmH family.

It localises to the cytoplasm. It catalyses the reaction cytidine(1402) in 16S rRNA + S-adenosyl-L-methionine = N(4)-methylcytidine(1402) in 16S rRNA + S-adenosyl-L-homocysteine + H(+). Functionally, specifically methylates the N4 position of cytidine in position 1402 (C1402) of 16S rRNA. This Carboxydothermus hydrogenoformans (strain ATCC BAA-161 / DSM 6008 / Z-2901) protein is Ribosomal RNA small subunit methyltransferase H.